The following is a 344-amino-acid chain: MVSMPNPILDAAAGVTPHRRPVWFMRQAGRSLPEYREIREGVSMLDSCFRPDMLAEITLQPVRRHDVDAAILFSDIVVPLKAAGVRVEIVPGRGPVMDHPLLTRQDIENLPILDHDVHEVAEGIGIIREELNDAQTLIGFAGAPFTLASYLVEGGPSKNHEKTKSLMHQDPESWHLLMRRLVPTIVQFLRTQIDAGVQAMQLFDSWAGFLSERDYREFVLPYSMEILAQVGDVPRIHFGVGTGELLTAMSEAGSEVVGVDWRVPLDVAAQRMVSPKVLQGNLDPAILFAGEDVMRREIARICAEADRAIAAGHATGHIFNLGHGVLPNTDPDAITRAVEIIHTF.

Residues Arg26–Arg30, Asp75, Tyr150, Ser205, and His323 each bind substrate.

The protein belongs to the uroporphyrinogen decarboxylase family. In terms of assembly, homodimer.

It localises to the cytoplasm. It carries out the reaction uroporphyrinogen III + 4 H(+) = coproporphyrinogen III + 4 CO2. It functions in the pathway porphyrin-containing compound metabolism; protoporphyrin-IX biosynthesis; coproporphyrinogen-III from 5-aminolevulinate: step 4/4. Catalyzes the decarboxylation of four acetate groups of uroporphyrinogen-III to yield coproporphyrinogen-III. This is Uroporphyrinogen decarboxylase from Corynebacterium diphtheriae (strain ATCC 700971 / NCTC 13129 / Biotype gravis).